The chain runs to 217 residues: 3-demethoxyubiquinol 3-hydroxylase (217 aa).

Fe cation is bound by residues glutamate 66, glutamate 96, histidine 99, glutamate 148, glutamate 180, and histidine 183.

It belongs to the COQ7 family. Fe cation serves as cofactor.

It is found in the cell membrane. The catalysed reaction is a 5-methoxy-2-methyl-3-(all-trans-polyprenyl)benzene-1,4-diol + AH2 + O2 = a 3-demethylubiquinol + A + H2O. The protein operates within cofactor biosynthesis; ubiquinone biosynthesis. Functionally, catalyzes the hydroxylation of 2-nonaprenyl-3-methyl-6-methoxy-1,4-benzoquinol during ubiquinone biosynthesis. In Ralstonia pickettii (strain 12J), this protein is 3-demethoxyubiquinol 3-hydroxylase.